The following is a 445-amino-acid chain: F-box protein At5g10340 (445 aa).

Residues 64 to 112 (SMEELLPHDVIEYHIMVRLDVKTLLKFKSVSKQWMSTIQSPSFQERQLI) enclose the F-box domain.

The chain is F-box protein At5g10340 from Arabidopsis thaliana (Mouse-ear cress).